A 466-amino-acid polypeptide reads, in one-letter code: MSTGKVVQVIGPVVDVAFESGQQVPDINNALKIDKGDGQTLTVEVSLALGDGIVRTIAMDSTDGLQRGMSVTDTGDAIKVPVGEATLGRVFNVLGEPVDNNGEIAAETPRHSIHRDAPSYDDLANSTEILETGIKVIDLLAPYVRGGKIGLFGGAGVGKTVLIQELIHNIAQGHNGISVFTGVGERTREGNDMYHEMAESGVLKQTAMVYGQMNEPPGARMRVALTGLTMAENFRDSEGKDVLLFIDNIFRFTQAGSEVSALLGRIPSAVGYQPTLATEMGQLQERITSTKKGSVTSIQAVYVPADDYTDPAPATTFAHLDATTNLERALTQQGIYPAVDPLASTSSALDPQVVGQEHYEVATEVQRTLQRYRELQDIISILGMDELSDEEKTTVNRARRIQFFLSQPFSVAETFTGINGEYVPVAETVRSFKEILDGKYDDLPEDAFRNVGAIEQVVEKAKTMAQ.

153–160 (GGAGVGKT) contributes to the ATP binding site.

The protein belongs to the ATPase alpha/beta chains family. F-type ATPases have 2 components, CF(1) - the catalytic core - and CF(0) - the membrane proton channel. CF(1) has five subunits: alpha(3), beta(3), gamma(1), delta(1), epsilon(1). CF(0) has three main subunits: a(1), b(2) and c(9-12). The alpha and beta chains form an alternating ring which encloses part of the gamma chain. CF(1) is attached to CF(0) by a central stalk formed by the gamma and epsilon chains, while a peripheral stalk is formed by the delta and b chains.

It localises to the cell membrane. It catalyses the reaction ATP + H2O + 4 H(+)(in) = ADP + phosphate + 5 H(+)(out). Functionally, produces ATP from ADP in the presence of a proton gradient across the membrane. The catalytic sites are hosted primarily by the beta subunits. This Leuconostoc citreum (strain KM20) protein is ATP synthase subunit beta.